A 300-amino-acid polypeptide reads, in one-letter code: Dihydroorotate dehydrogenase B (NAD(+)), catalytic subunit (300 aa).

Residues Ser20 and 44-45 contribute to the FMN site; that span reads KG. Residues Lys44 and 68–72 contribute to the substrate site; that span reads NSVGL. FMN-binding residues include Asn98 and Asn124. Residue Asn124 coordinates substrate. Residue Cys127 is the Nucleophile of the active site. FMN is bound by residues Lys162 and Ile188. 189-190 contributes to the substrate binding site; that stretch reads NT. Residues Gly214, 240 to 241, and 262 to 263 each bind FMN; these read GG and GT.

This sequence belongs to the dihydroorotate dehydrogenase family. Type 1 subfamily. Heterotetramer of 2 PyrK and 2 PyrD type B subunits. The cofactor is FMN.

Its subcellular location is the cytoplasm. The enzyme catalyses (S)-dihydroorotate + NAD(+) = orotate + NADH + H(+). It participates in pyrimidine metabolism; UMP biosynthesis via de novo pathway; orotate from (S)-dihydroorotate (NAD(+) route): step 1/1. Catalyzes the conversion of dihydroorotate to orotate with NAD(+) as electron acceptor. The chain is Dihydroorotate dehydrogenase B (NAD(+)), catalytic subunit (pyrD) from Caldicellulosiruptor bescii (strain ATCC BAA-1888 / DSM 6725 / KCTC 15123 / Z-1320) (Anaerocellum thermophilum).